The following is a 60-amino-acid chain: MNTQRAKDISESAAMAYVTYEGVPIYIQHVNEDKETARIFPIGNPQFEQEVLLSDLQEHF.

The protein belongs to the SspH family.

The protein localises to the spore core. This chain is Small, acid-soluble spore protein H, found in Bacillus velezensis (strain DSM 23117 / BGSC 10A6 / LMG 26770 / FZB42) (Bacillus amyloliquefaciens subsp. plantarum).